Here is a 345-residue protein sequence, read N- to C-terminus: Biotin synthase (345 aa).

In terms of domain architecture, Radical SAM core spans 66–291 (PEVEIEGIIS…RTILRFAGGR (226 aa)). Residues Cys-81, Cys-85, and Cys-88 each contribute to the [4Fe-4S] cluster site. Positions 124, 157, 216, and 286 each coordinate [2Fe-2S] cluster.

It belongs to the radical SAM superfamily. Biotin synthase family. In terms of assembly, homodimer. Requires [4Fe-4S] cluster as cofactor. [2Fe-2S] cluster serves as cofactor.

It catalyses the reaction (4R,5S)-dethiobiotin + (sulfur carrier)-SH + 2 reduced [2Fe-2S]-[ferredoxin] + 2 S-adenosyl-L-methionine = (sulfur carrier)-H + biotin + 2 5'-deoxyadenosine + 2 L-methionine + 2 oxidized [2Fe-2S]-[ferredoxin]. It participates in cofactor biosynthesis; biotin biosynthesis; biotin from 7,8-diaminononanoate: step 2/2. Its function is as follows. Catalyzes the conversion of dethiobiotin (DTB) to biotin by the insertion of a sulfur atom into dethiobiotin via a radical-based mechanism. In Mycobacterium leprae (strain Br4923), this protein is Biotin synthase.